Here is a 131-residue protein sequence, read N- to C-terminus: Lymphocyte antigen 6C2 (131 aa).

Positions methionine 1 to glycine 26 are cleaved as a signal peptide. Residues leucine 27–glycine 116 enclose the UPAR/Ly6 domain. 5 disulfides stabilise this stretch: cysteine 29–cysteine 53, cysteine 32–cysteine 41, cysteine 46–cysteine 74, cysteine 78–cysteine 95, and cysteine 96–cysteine 101. Glycine 109 carries the GPI-anchor amidated glycine lipid modification. Positions serine 110–leucine 131 are cleaved as a propeptide — removed in mature form.

Its subcellular location is the cell membrane. The polypeptide is Lymphocyte antigen 6C2 (Ly6c2) (Mus musculus (Mouse)).